Reading from the N-terminus, the 1838-residue chain is Collagen alpha-1(V) chain (1838 aa).

Residues Met-1–Ala-37 form the signal peptide. The Laminin G-like domain occupies Asp-72–Cys-244. The interval Arg-231–Glu-443 is nonhelical region. 5 positions are modified to sulfotyrosine: Tyr-234, Tyr-236, Tyr-240, Tyr-262, and Tyr-263. Disordered regions lie at residues Pro-242 to Glu-269, Glu-281 to Glu-457, Pro-470 to Leu-520, Phe-526 to Gln-545, and Gly-559 to Gln-1574. Residues Asn-258–Glu-269 show a composition bias toward acidic residues. A compositionally biased stretch (basic and acidic residues) spans Asp-285–Thr-304. The span at Glu-309–Thr-323 shows a compositional bias: low complexity. A sulfotyrosine mark is found at Tyr-338, Tyr-340, Tyr-346, and Tyr-347. Positions Pro-377–Asn-388 are enriched in polar residues. The segment covering Gly-396–Glu-406 has biased composition (acidic residues). 4 positions are modified to sulfotyrosine: Tyr-416, Tyr-417, Tyr-420, and Tyr-421. Positions Tyr-417–Ser-428 are enriched in low complexity. The tract at residues Gly-444–Arg-558 is interrupted collagenous region. Residues Pro-470 to Thr-485 are compositionally biased toward pro residues. Residues Leu-506–Leu-520 show a composition bias toward low complexity. Residues Gly-559–Gly-1570 form a triple-helical region region. Pro-570 and Pro-576 each carry hydroxyproline. Positions Asp-587 to Gln-597 are enriched in low complexity. Hydroxyproline is present on Pro-621. Residue Lys-627 is modified to 5-hydroxylysine. Pro-639 is modified (hydroxyproline). Lys-642 bears the 5-hydroxylysine mark. Pro-648, Pro-654, Pro-657, Pro-675, and Pro-678 each carry hydroxyproline. Residues Pro-671 to Pro-686 show a composition bias toward low complexity. Lys-687 is modified (5-hydroxylysine). Positions Lys-687–Pro-696 are enriched in pro residues. Pro-690, Pro-696, and Pro-705 each carry hydroxyproline. Lys-708 is modified (5-hydroxylysine). A hydroxyproline mark is found at Pro-717, Pro-720, Pro-726, and Pro-732. Residues Gln-722–Pro-741 are compositionally biased toward low complexity. A 5-hydroxylysine modification is found at Lys-744. The span at Leu-747–Pro-756 shows a compositional bias: low complexity. Pro-750, Pro-756, Pro-762, Pro-765, and Pro-771 each carry hydroxyproline. Lys-774 is modified (5-hydroxylysine). Hydroxyproline occurs at positions 780 and 789. 4 positions are modified to 5-hydroxylysine: Lys-795, Lys-804, Lys-807, and Lys-810. Hydroxyproline is present on Pro-816. Residue Lys-819 is modified to 5-hydroxylysine. A Hydroxyproline modification is found at Pro-834. Residues Arg-837–Lys-846 are compositionally biased toward basic and acidic residues. At Lys-846 the chain carries 5-hydroxylysine. Pro-861 carries the post-translational modification Hydroxyproline. Lys-864 is subject to 5-hydroxylysine. The span at Leu-867–Pro-876 shows a compositional bias: low complexity. Hydroxyproline is present on residues Pro-870, Pro-873, and Pro-876. The residue at position 882 (Lys-882) is a 5-hydroxylysine. A hydroxyproline mark is found at Pro-888 and Pro-891. 5-hydroxylysine is present on Lys-897. 2 positions are modified to hydroxyproline: Pro-903 and Pro-906. The segment covering Pro-908–Pro-917 has biased composition (low complexity). Hydroxyproline is present on residues Pro-930 and Pro-945. Composition is skewed to low complexity over residues Lys-971–Thr-990 and Val-999–Met-1011. Hydroxyproline is present on residues Pro-1017, Pro-1020, Pro-1023, and Pro-1029. Residues Ser-1088 to Pro-1104 are compositionally biased toward low complexity. Over residues Arg-1106 to Pro-1115 the composition is skewed to pro residues. Positions Ala-1116–Val-1140 are enriched in low complexity. A hydroxyproline mark is found at Pro-1221 and Pro-1224. Residues Pro-1259–Pro-1268 show a composition bias toward low complexity. Composition is skewed to pro residues over residues Thr-1380–Ala-1398 and Ser-1454–Leu-1469. Hydroxyproline is present on residues Pro-1467 and Pro-1470. Positions Pro-1485–Pro-1494 are enriched in low complexity. A compositionally biased stretch (pro residues) spans Pro-1526 to Pro-1541. Residues Lys-1542–Lys-1554 show a composition bias toward low complexity. A compositionally biased stretch (pro residues) spans Pro-1560–Pro-1569. The tract at residues Glu-1571–Ala-1605 is nonhelical region. Sulfotyrosine is present on residues Tyr-1601 and Tyr-1604. Residues Asp-1606 to Gly-1838 constitute a propeptide, C-terminal propeptide. Residues Glu-1609–Met-1837 enclose the Fibrillar collagen NC1 domain. Disulfide bonds link Cys-1639/Cys-1671, Cys-1680/Cys-1835, and Cys-1746/Cys-1789. Residues Asp-1657, Asn-1659, Gln-1660, Cys-1662, and Asp-1665 each contribute to the Ca(2+) site.

This sequence belongs to the fibrillar collagen family. Trimers of two alpha 1(V) and one alpha 2(V) chains in most tissues and trimers of one alpha 1(V), one alpha 2(V), and one alpha 3(V) chains in placenta. Interacts with CSPG4. In terms of processing, prolines at the third position of the tripeptide repeating unit (G-X-Y) are hydroxylated in some or all of the chains. Sulfated on 40% of tyrosines.

It localises to the secreted. The protein resides in the extracellular space. It is found in the extracellular matrix. Its function is as follows. Type V collagen is a member of group I collagen (fibrillar forming collagen). It is a minor connective tissue component of nearly ubiquitous distribution. Type V collagen binds to DNA, heparan sulfate, thrombospondin, heparin, and insulin. This is Collagen alpha-1(V) chain (COL5A1) from Homo sapiens (Human).